The chain runs to 618 residues: Uptake hydrogenase large subunit (618 aa).

Ni(2+) is bound by residues Cys75, Cys78, Cys597, and Cys600.

Belongs to the [NiFe]/[NiFeSe] hydrogenase large subunit family. As to quaternary structure, heterodimer of a large and a small subunit. It depends on Ni(2+) as a cofactor.

Its subcellular location is the cell membrane. It catalyses the reaction H2 + A = AH2. Functionally, this enzyme recycles the H(2) produced by nitrogenase to increase the production of ATP and to protect nitrogenase against inhibition or damage by O(2) under carbon- or phosphate-limited conditions. The protein is Uptake hydrogenase large subunit (hoxG) of Cupriavidus necator (strain ATCC 17699 / DSM 428 / KCTC 22496 / NCIMB 10442 / H16 / Stanier 337) (Ralstonia eutropha).